The primary structure comprises 76 residues: Cytochrome c oxidase subunit 6C (76 aa).

At 4–22 (GALLPKPQMRGLLAKRLRV) the chain is on the mitochondrial matrix side. The chain crosses the membrane as a helical span at residues 23–44 (HIAGAFIVALGVAAAYKFGVAE). Residues 45-76 (PRKKAYAEFYRNYDSMKDFEEMRKAGIFQSAK) are Mitochondrial intermembrane-facing.

Belongs to the cytochrome c oxidase subunit 6c family. As to quaternary structure, component of the cytochrome c oxidase (complex IV, CIV), a multisubunit enzyme composed of 14 subunits. The complex is composed of a catalytic core of 3 subunits MT-CO1, MT-CO2 and MT-CO3, encoded in the mitochondrial DNA, and 11 supernumerary subunits COX4I, COX5A, COX5B, COX6A, COX6B, COX6C, COX7A, COX7B, COX7C, COX8 and NDUFA4, which are encoded in the nuclear genome. The complex exists as a monomer or a dimer and forms supercomplexes (SCs) in the inner mitochondrial membrane with NADH-ubiquinone oxidoreductase (complex I, CI) and ubiquinol-cytochrome c oxidoreductase (cytochrome b-c1 complex, complex III, CIII), resulting in different assemblies (supercomplex SCI(1)III(2)IV(1) and megacomplex MCI(2)III(2)IV(2)). In terms of processing, acetylation of Lys-61 is observed in liver mitochondria from fasted mice but not from fed mice.

Its subcellular location is the mitochondrion inner membrane. It functions in the pathway energy metabolism; oxidative phosphorylation. Its function is as follows. Component of the cytochrome c oxidase, the last enzyme in the mitochondrial electron transport chain which drives oxidative phosphorylation. The respiratory chain contains 3 multisubunit complexes succinate dehydrogenase (complex II, CII), ubiquinol-cytochrome c oxidoreductase (cytochrome b-c1 complex, complex III, CIII) and cytochrome c oxidase (complex IV, CIV), that cooperate to transfer electrons derived from NADH and succinate to molecular oxygen, creating an electrochemical gradient over the inner membrane that drives transmembrane transport and the ATP synthase. Cytochrome c oxidase is the component of the respiratory chain that catalyzes the reduction of oxygen to water. Electrons originating from reduced cytochrome c in the intermembrane space (IMS) are transferred via the dinuclear copper A center (CU(A)) of subunit 2 and heme A of subunit 1 to the active site in subunit 1, a binuclear center (BNC) formed by heme A3 and copper B (CU(B)). The BNC reduces molecular oxygen to 2 water molecules using 4 electrons from cytochrome c in the IMS and 4 protons from the mitochondrial matrix. In Mus musculus (Mouse), this protein is Cytochrome c oxidase subunit 6C (Cox6c).